The chain runs to 276 residues: AT-hook motif nuclear-localized protein 17 (276 aa).

The span at 1–10 (MKGEYREQKS) shows a compositional bias: basic and acidic residues. 2 disordered regions span residues 1 to 80 (MKGE…RDTD) and 212 to 248 (AEEE…SGGE). Composition is skewed to low complexity over residues 20 to 31 (HQQQQQQQQQQH) and 40 to 49 (SSTVTPTVDD). A DNA-binding region (a.T hook) is located at residues 56–68 (RRPRGRPPGSKNK). The region spanning 80–230 (DPPMSPYILE…GTGEREGQSP (151 aa)) is the PPC domain. Over residues 212 to 227 (AEEEQKHSAGTGEREG) the composition is skewed to basic and acidic residues. A compositionally biased stretch (gly residues) spans 233–248 (SGGGEESGQMAGSGGE).

It localises to the nucleus. Transcription factor that specifically binds AT-rich DNA sequences related to the nuclear matrix attachment regions (MARs). The protein is AT-hook motif nuclear-localized protein 17 of Arabidopsis thaliana (Mouse-ear cress).